The primary structure comprises 1088 residues: cGMP-dependent protein kinase, isozyme 2 forms cD4/T1/T3A/T3B (1088 aa).

The tract at residues 1-69 (MRFCFDRLCF…LFYADYQKLQ (69 aa)) is dimerization. A compositionally biased stretch (polar residues) spans 15–28 (PAQNSNSNAPHSST). Disordered stretches follow at residues 15-39 (PAQNSNSNAPHSSTTVDAPPRPADV), 128-158 (PAPSIQIQIQQRYRRHSSAEDRNLNTRRNDS), 191-211 (NNNNNTNTHPSGSNSGSNNNS), 305-336 (QGSPVLYHQPSPGSSQPVAIPGATCHSPTQLQ), and 441-477 (AGTGGASGSGAGGSGGSGPGTATGATRKSGQNFQRQR). The segment at 70–528 (PAIIDRDWER…DFMKNLDLTQ (459 aa)) is regulatory. The segment covering 144 to 157 (SSAEDRNLNTRRND) has biased composition (basic and acidic residues). The segment covering 441–461 (AGTGGASGSGAGGSGGSGPGT) has biased composition (gly residues). Residues 584–587 (GELA), 594–595 (RT), Arg699, 708–711 (GEKA), and 718–719 (RT) contribute to the 3',5'-cyclic GMP site. The Protein kinase domain occupies 777–1036 (LRVIATLGVG…ISEIQKHKWF (260 aa)). ATP is bound by residues 783 to 791 (LGVGGFGRV) and Lys807. Asp901 serves as the catalytic Proton acceptor. Residues Thr934 and Thr938 each carry the phosphothreonine modification. Residues 1037-1088 (DGFYWWGLQNCTLEPPIKPAVKSVVDTTNFDDYPPDPEGPPPDDVTGWDKDF) enclose the AGC-kinase C-terminal domain. The segment at 1064–1088 (TNFDDYPPDPEGPPPDDVTGWDKDF) is disordered.

This sequence belongs to the protein kinase superfamily. AGC Ser/Thr protein kinase family. cGMP subfamily.

The catalysed reaction is L-seryl-[protein] + ATP = O-phospho-L-seryl-[protein] + ADP + H(+). The enzyme catalyses L-threonyl-[protein] + ATP = O-phospho-L-threonyl-[protein] + ADP + H(+). In Drosophila melanogaster (Fruit fly), this protein is cGMP-dependent protein kinase, isozyme 2 forms cD4/T1/T3A/T3B (for).